Consider the following 555-residue polypeptide: Aerobic glycerol-3-phosphate dehydrogenase (555 aa).

24–52 serves as a coordination point for FAD; it reads DLFIIGGGITGAGTALDAASRGMKVALSE.

It belongs to the FAD-dependent glycerol-3-phosphate dehydrogenase family. The cofactor is FAD.

It is found in the cytoplasm. The catalysed reaction is a quinone + sn-glycerol 3-phosphate = dihydroxyacetone phosphate + a quinol. The protein operates within polyol metabolism; glycerol degradation via glycerol kinase pathway; glycerone phosphate from sn-glycerol 3-phosphate (aerobic route): step 1/1. The sequence is that of Aerobic glycerol-3-phosphate dehydrogenase (glpD) from Bacillus subtilis (strain 168).